Here is a 531-residue protein sequence, read N- to C-terminus: MRLNLISFFIIFTILVSISNSQEFRSYTGEGNNKQNPKQGSIFTPFIRLANPIKFNKNGFPNITNQPSRAISNIIFDQQTHIGSKEHLTDMFNMWGQFLIHNMALSKPEPNSWPIKVPKCDQYFDPACIGNKTMNYFRTRATEVPCDVGKTVVDEDGKCYEQINSLGSYIDGNVLYGNSEEICKNLRSLSGGEMKMTVTDVGDLPPKNVPGVPMDNDANLFPIDQLYSVGERRGNENPGLLSIHTLLLRDHNRLARKFARLHPEWDDERVFQQSRSCIIEQIQKITYDEYLPTTLGSFPSYTGYDANVNAQVSNEFTTTAFRFGHSEVGPFMEYYSENGTRLQPLPIKFSYFNPHALNRGVEPLIRGLIINEEENIDIYMISDLRNFLFGKPGQGGLDLASRNLQRNRDHGIPPYNSLRRQLGLRPVQTWSDITSDPQIQNRLKNAYKSVDDIDSYVGGLAEDHMEGSCVGQTFYLIIYEQFFRTRAGDRFWYETPEMRMVNRECETTTFAEVIKRTTSNIGYVQPNVFRK.

The N-terminal stretch at 1-21 (MRLNLISFFIIFTILVSISNS) is a signal peptide. Asn62 carries N-linked (GlcNAc...) asparagine glycosylation. His101 acts as the Proton acceptor in catalysis. Residues Asn131 and Asn338 are each glycosylated (N-linked (GlcNAc...) asparagine).

This sequence belongs to the peroxidase family.

The protein resides in the secreted. It catalyses the reaction 2 a phenolic donor + H2O2 = 2 a phenolic radical donor + 2 H2O. In Dictyostelium discoideum (Social amoeba), this protein is Peroxinectin A (poxA).